The chain runs to 309 residues: Glutaminase (309 aa).

Substrate is bound by residues serine 64, asparagine 114, glutamate 160, asparagine 167, tyrosine 191, tyrosine 243, and valine 261.

This sequence belongs to the glutaminase family. In terms of assembly, homotetramer.

The enzyme catalyses L-glutamine + H2O = L-glutamate + NH4(+). This is Glutaminase from Azorhizobium caulinodans (strain ATCC 43989 / DSM 5975 / JCM 20966 / LMG 6465 / NBRC 14845 / NCIMB 13405 / ORS 571).